A 419-amino-acid polypeptide reads, in one-letter code: MQKLIIHGGKPLKGSINISGAKNAVLPIMAASILTDKLHITNVPKLTDVSTMKDLLRSHGADIKILEHPDEFELIINTGNINNFTANYEIVRKMRASIWVLGPLLTKYGKAKVSLPGGCAIGARQVDLHIAVLKAMGATIEIEDGYINASSKGRIKGTHFVFDKVSVGATINAILAAVLAEGETVLFNCGREPEIVDLCNCLIKMGADIAGVGTSEITIKGKDSLNKASYKVLSDRIEAGTYMFAAAITKGDVKICGIDYHIIENIALKLIETGLKVVQINNGVQVTYEGKLNSVDLETNPYPGFATDLQAQFMSLMTLSSGVSMITENIFENRFMHVPELCRMGADIVVRGNKAVVRGVEMLKGAEVMASDLRASVSLILAGLSTNSKTVLHRIYHLDRGFQDLEKKLSNCGADIKRV.

Position 22 to 23 (22 to 23 (KN)) interacts with phosphoenolpyruvate. Arginine 95 contributes to the UDP-N-acetyl-alpha-D-glucosamine binding site. Catalysis depends on cysteine 119, which acts as the Proton donor. 2-(S-cysteinyl)pyruvic acid O-phosphothioketal is present on cysteine 119. Residues 164–167 (KVSV), aspartate 308, and isoleucine 330 each bind UDP-N-acetyl-alpha-D-glucosamine.

The protein belongs to the EPSP synthase family. MurA subfamily.

It localises to the cytoplasm. It carries out the reaction phosphoenolpyruvate + UDP-N-acetyl-alpha-D-glucosamine = UDP-N-acetyl-3-O-(1-carboxyvinyl)-alpha-D-glucosamine + phosphate. It participates in cell wall biogenesis; peptidoglycan biosynthesis. Its function is as follows. Cell wall formation. Adds enolpyruvyl to UDP-N-acetylglucosamine. The chain is UDP-N-acetylglucosamine 1-carboxyvinyltransferase from Rickettsia felis (strain ATCC VR-1525 / URRWXCal2) (Rickettsia azadi).